Consider the following 382-residue polypeptide: Anhydro-N-acetylmuramic acid kinase (382 aa).

Residue 18-25 (GTSLDGVD) coordinates ATP.

This sequence belongs to the anhydro-N-acetylmuramic acid kinase family.

The catalysed reaction is 1,6-anhydro-N-acetyl-beta-muramate + ATP + H2O = N-acetyl-D-muramate 6-phosphate + ADP + H(+). It functions in the pathway amino-sugar metabolism; 1,6-anhydro-N-acetylmuramate degradation. Its pathway is cell wall biogenesis; peptidoglycan recycling. Functionally, catalyzes the specific phosphorylation of 1,6-anhydro-N-acetylmuramic acid (anhMurNAc) with the simultaneous cleavage of the 1,6-anhydro ring, generating MurNAc-6-P. Is required for the utilization of anhMurNAc either imported from the medium or derived from its own cell wall murein, and thus plays a role in cell wall recycling. The chain is Anhydro-N-acetylmuramic acid kinase from Ralstonia nicotianae (strain ATCC BAA-1114 / GMI1000) (Ralstonia solanacearum).